The sequence spans 322 residues: MSFSDLKLFALSSNKELAERVAQEIGIELGKSSVRQFSDGEIQVNIEESIRGKHVFILQSTSSPVNDNLLEILIMVDALKRASAESVNVVMPYYGYARQDRKARAREPITSKLVANMLEVAGVDRLLTIDLHAAQIQGFFDIPVDHLMGAPLIADYFERRGMVGSDYVVVSPDHGGVTRARKLAEFLKTSIAIIDKRRSVDKMNTSEVMNIIGKVEGKTCILIDDMIDTAGTICHAADALAEAGAVEVYASCTHPVLSGPATDNIQKSAIKKLVVLDTIYLPEERLIDKIEQISIAHLLGDAIVRIHEKRPLSPLFDIEKKI.

Residues 39 to 41 (DGE) and 98 to 99 (RQ) each bind ATP. The Mg(2+) site is built by H132 and D173. The active site involves K196. D-ribose 5-phosphate contacts are provided by residues R198, D224, and 228–232 (DTAGT).

The protein belongs to the ribose-phosphate pyrophosphokinase family. Class I subfamily. Homohexamer. The cofactor is Mg(2+).

It is found in the cytoplasm. The enzyme catalyses D-ribose 5-phosphate + ATP = 5-phospho-alpha-D-ribose 1-diphosphate + AMP + H(+). It functions in the pathway metabolic intermediate biosynthesis; 5-phospho-alpha-D-ribose 1-diphosphate biosynthesis; 5-phospho-alpha-D-ribose 1-diphosphate from D-ribose 5-phosphate (route I): step 1/1. Its function is as follows. Involved in the biosynthesis of the central metabolite phospho-alpha-D-ribosyl-1-pyrophosphate (PRPP) via the transfer of pyrophosphoryl group from ATP to 1-hydroxyl of ribose-5-phosphate (Rib-5-P). The sequence is that of Ribose-phosphate pyrophosphokinase 1 from Streptococcus pneumoniae serotype 4 (strain ATCC BAA-334 / TIGR4).